A 237-amino-acid chain; its full sequence is MEKNDVINFKALEKELQAALAADEKYKRENAAKLRAVEQRVPSYEEFRGIVLASHLKPLEQKDKMGGKRFVPWNCHTTRERTSQDVVTEIPQEKSPFQPTTSAEFYRDWRRHLRSGPERYQALLQLGGPKLGHLFQMDVGFGLLGELLVALAEHARLSDRTAVLGILHSLANTGRFNLNLSLLSHAERESCQRLFQKLQAMSTTRPMQEGLTVEEPSAGLQGEEGLLQELLELYGVH.

The stretch at 8-33 (NFKALEKELQAALAADEKYKRENAAK) forms a coiled coil.

This sequence belongs to the DNAAF19/PR46b family. In terms of assembly, homodimer.

It is found in the cytoplasm. It localises to the cell projection. The protein localises to the cilium. The protein resides in the flagellum. Its function is as follows. Dynein-attachment factor required for cilia motility. The protein is Dynein axonemal assembly factor 19 (Dnaaf19) of Mus musculus (Mouse).